The following is a 252-amino-acid chain: uncharacterized protein (252 aa).

Phosphoserine occurs at positions 195 and 209.

Testis-specific. Highly expressed in spermatocytes (at protein level).

Functionally, essential for normal spermatogenesis and male fertility. This is an uncharacterized protein from Mus musculus (Mouse).